Here is a 391-residue protein sequence, read N- to C-terminus: B2 bradykinin receptor (391 aa).

Over 1–60 the chain is Extracellular; that stretch reads MFSPWKISMFLSVREDSVPTTASFSADMLNVTLQGPTLNGTFAQSKCPQVEWLGWLNTIQ. 2 N-linked (GlcNAc...) asparagine glycosylation sites follow: Asn-30 and Asn-39. A helical membrane pass occupies residues 61–84; sequence PPFLWVLFVLATLENIFVLSVFCL. Over 85-93 the chain is Cytoplasmic; it reads HKSSCTVAE. Residues 94 to 118 traverse the membrane as a helical segment; the sequence is IYLGNLAAADLILACGLPFWAITIS. Residues 119–131 lie on the Extracellular side of the membrane; it reads NNFDWLFGETLCR. Cys-130 and Cys-211 are joined by a disulfide. A helical membrane pass occupies residues 132–153; it reads VVNAIISMNLYSSICFLMLVSI. At 154–175 the chain is on the cytoplasmic side; the sequence is DRYLALVKTMSMGRMRGVRWAK. Tyr-156 bears the Phosphotyrosine mark. A helical transmembrane segment spans residues 176 to 198; the sequence is LYSLVIWGCTLLLSSPMLVFRTM. Residues 199 to 221 are Extracellular-facing; that stretch reads KEYSDEGHNVTACVISYPSLIWE. A glycan (N-linked (GlcNAc...) asparagine) is linked at Asn-207. A helical transmembrane segment spans residues 222–248; sequence VFTNMLLNVVGFLLPLSVITFCTMQIM. The Cytoplasmic portion of the chain corresponds to 249–267; the sequence is QVLRNNEMQKFKEIQTERR. Residues 268-292 form a helical membrane-spanning segment; it reads ATVLVLVVLLLFIICWLPFQISTFL. Residues 293 to 311 are Extracellular-facing; sequence DTLHRLGILSSCQDERIID. Residues 312-335 form a helical membrane-spanning segment; sequence VITQIASFMAYSNSCLNPLVYVIV. The Cytoplasmic segment spans residues 336 to 391; sequence GKRFRKKSWEVYQGVCQKGGCRSEPIQMENSMGTLRTSISVERQIHKLQDWAGSRQ. The residue at position 347 (Tyr-347) is a Phosphotyrosine. A lipid anchor (S-palmitoyl cysteine) is attached at Cys-351. Position 366 is a phosphoserine (Ser-366). Thr-369 is subject to Phosphothreonine. Ser-373 and Ser-375 each carry phosphoserine; by GRK6.

Belongs to the G-protein coupled receptor 1 family. Bradykinin receptor subfamily. BDKRB2 sub-subfamily. As to quaternary structure, forms a complex with PECAM1 and GNAQ. Interacts with PECAM1. As to expression, ubiquitous. Widespread in normal smooth muscle tissue and neurons.

The protein localises to the cell membrane. Its function is as follows. Receptor for bradykinin. It is associated with G proteins that activate a phosphatidylinositol-calcium second messenger system. The sequence is that of B2 bradykinin receptor (BDKRB2) from Homo sapiens (Human).